We begin with the raw amino-acid sequence, 206 residues long: Transmembrane emp24 domain-containing protein bai (206 aa).

An N-terminal signal peptide occupies residues 1–20 (MARTLLILCTLMAWAWTGEA). Over 21–172 (VMFKLTPNTQ…RDTNEKTNSR (152 aa)) the chain is Lumenal. Residues 30–140 (QKCLKEDIQA…LKPLEVDLKR (111 aa)) form the GOLD domain. Residues 173 to 193 (VLFFSIFSMCCLLGLATWQVL) traverse the membrane as a helical segment. At 194–206 (YLRRYFKAKKLIE) the chain is on the cytoplasmic side.

The protein belongs to the EMP24/GP25L family.

Its subcellular location is the membrane. Eca and bai are essential, though not redundant, for dorsoventral patterning of the embryo. Specifically required during early embryogenesis for the activity of maternal tkv, while the zygotic tkv is not affected. This Drosophila ananassae (Fruit fly) protein is Transmembrane emp24 domain-containing protein bai.